The sequence spans 229 residues: Chloride conductance regulatory protein ICln (229 aa).

This sequence belongs to the pICln (TC 1.A.47) family. In terms of assembly, homooligomer.

The protein localises to the cytoplasm. The protein resides in the nucleus. Its function is as follows. May participate in cellular volume control by activation of a swelling-induced chloride conductance pathway. In Arabidopsis thaliana (Mouse-ear cress), this protein is Chloride conductance regulatory protein ICln.